A 131-amino-acid chain; its full sequence is DNA-directed RNA polymerase subunit omega (131 aa).

Residues 78–131 (DEPEAEAVPALSSAPDAAQSDAMGDVQFDRMTEEDLLRGLEGLVPPAATDDDGE) are disordered. The segment covering 104-115 (QFDRMTEEDLLR) has biased composition (basic and acidic residues).

It belongs to the RNA polymerase subunit omega family. In terms of assembly, the RNAP catalytic core consists of 2 alpha, 1 beta, 1 beta' and 1 omega subunit. When a sigma factor is associated with the core the holoenzyme is formed, which can initiate transcription.

It carries out the reaction RNA(n) + a ribonucleoside 5'-triphosphate = RNA(n+1) + diphosphate. Functionally, promotes RNA polymerase assembly. Latches the N- and C-terminal regions of the beta' subunit thereby facilitating its interaction with the beta and alpha subunits. The chain is DNA-directed RNA polymerase subunit omega from Beijerinckia indica subsp. indica (strain ATCC 9039 / DSM 1715 / NCIMB 8712).